The primary structure comprises 250 residues: Proteasome subunit alpha type-2 (250 aa).

A Glycyl lysine isopeptide (Lys-Gly) (interchain with G-Cter in ubiquitin) cross-link involves residue K108.

This sequence belongs to the peptidase T1A family. In terms of assembly, the 26S proteasome consists of a 20S proteasome core and two 19S regulatory subunits. The 20S proteasome core is composed of 28 subunits that are arranged in four stacked rings, resulting in a barrel-shaped structure. The two end rings are each formed by seven alpha subunits, and the two central rings are each formed by seven beta subunits. The catalytic chamber with the active sites is on the inside of the barrel.

It is found in the cytoplasm. Its subcellular location is the nucleus. In terms of biological role, the proteasome degrades poly-ubiquitinated proteins in the cytoplasm and in the nucleus. It is essential for the regulated turnover of proteins and for the removal of misfolded proteins. The proteasome is a multicatalytic proteinase complex that is characterized by its ability to cleave peptides with Arg, Phe, Tyr, Leu, and Glu adjacent to the leaving group at neutral or slightly basic pH. It has an ATP-dependent proteolytic activity. This is Proteasome subunit alpha type-2 (PRE8) from Saccharomyces cerevisiae (strain ATCC 204508 / S288c) (Baker's yeast).